Consider the following 362-residue polypeptide: Protein ABHD12B (362 aa).

Belongs to the serine esterase family.

The sequence is that of Protein ABHD12B from Homo sapiens (Human).